We begin with the raw amino-acid sequence, 165 residues long: Crossover junction endodeoxyribonuclease RuvC (165 aa).

Catalysis depends on residues Asp8, Glu67, and Asp139. 3 residues coordinate Mg(2+): Asp8, Glu67, and Asp139.

The protein belongs to the RuvC family. As to quaternary structure, homodimer which binds Holliday junction (HJ) DNA. The HJ becomes 2-fold symmetrical on binding to RuvC with unstacked arms; it has a different conformation from HJ DNA in complex with RuvA. In the full resolvosome a probable DNA-RuvA(4)-RuvB(12)-RuvC(2) complex forms which resolves the HJ. Requires Mg(2+) as cofactor.

The protein localises to the cytoplasm. The enzyme catalyses Endonucleolytic cleavage at a junction such as a reciprocal single-stranded crossover between two homologous DNA duplexes (Holliday junction).. Functionally, the RuvA-RuvB-RuvC complex processes Holliday junction (HJ) DNA during genetic recombination and DNA repair. Endonuclease that resolves HJ intermediates. Cleaves cruciform DNA by making single-stranded nicks across the HJ at symmetrical positions within the homologous arms, yielding a 5'-phosphate and a 3'-hydroxyl group; requires a central core of homology in the junction. The consensus cleavage sequence is 5'-(A/T)TT(C/G)-3'. Cleavage occurs on the 3'-side of the TT dinucleotide at the point of strand exchange. HJ branch migration catalyzed by RuvA-RuvB allows RuvC to scan DNA until it finds its consensus sequence, where it cleaves and resolves the cruciform DNA. The polypeptide is Crossover junction endodeoxyribonuclease RuvC (Alkalilimnicola ehrlichii (strain ATCC BAA-1101 / DSM 17681 / MLHE-1)).